A 186-amino-acid chain; its full sequence is MLALISRLLDWFRSLFWKEEMELTLVGLQYSGKTTFVNVIASGQFSEDMIPTVGFNMRKVTKGNVTIKIWDIGGQPRFRSMWERYCRGVNAIVYMIDAADREKIEASRNELHNLLDKPQLQGIPVLVLGNKRDLPNALDEKQLIEKMNLSAIQDREICCYSISCKEKDNIDITLQWLIQHSKSRRS.

The residue at position 1 (M1) is an N-acetylmethionine. The segment at residues M1–E19 is an intramembrane region (note=Mediates targeting to membranes). Residues Q29–T35, D71–Q75, and N130–D133 each bind GTP. K141 participates in a covalent cross-link: Glycyl lysine isopeptide (Lys-Gly) (interchain with G-Cter in ubiquitin).

The protein belongs to the small GTPase superfamily. Arf family. Interacts with tubulin. Interacts with BORCS5; recruits ARL8B to lysosomes. Interacts with VPS41; the interaction mediates the recruitment of the HOPS complex to lysosomes. Interacts (GTP-bound form) with PLEKHM2 (via RUN domain); the interaction is required to recruit the motor protein kinesin-1 on lysosomes. Interacts (GTP-bound form) with PLEKHM1 (via RUN domain); the interaction is required for PLEKHM1 localization to lysosomes and for ARL8B function in delivery and degradation of endocytic and autophagic cargo in lysosomes. PLEKHM1 and PLEKHM2 compete for interaction with ARL8B. Interacts (GTP-bound form) with RUFY1; the interaction is required for RUFY1 endosomal location. When GTP-bound, interacts with RUFY3 and RUFY4, but not with RUFY1, nor RUFY2. Post-translationally, ubiquitinated at Lys-141 by RNF167, leading to its degradation. As to expression, ubiquitously expressed.

Its subcellular location is the late endosome membrane. The protein resides in the lysosome membrane. The protein localises to the cytoplasm. It localises to the cytoskeleton. It is found in the spindle. Its subcellular location is the cell projection. The protein resides in the axon. The protein localises to the synapse. It localises to the cytolytic granule membrane. It is found in the early endosome membrane. The catalysed reaction is GTP + H2O = GDP + phosphate + H(+). Small GTPase which cycles between active GTP-bound and inactive GDP-bound states. In its active state, binds to a variety of effector proteins playing a key role in the regulation of lysosomal positioning which is important for nutrient sensing, natural killer cell-mediated cytotoxicity and antigen presentation. Along with its effectors, orchestrates lysosomal transport and fusion. Localizes specifically to lysosomal membranes and mediates anterograde lysosomal motility by recruiting PLEKHM2, which in turn recruits the motor protein kinesin-1 on lysosomes. Required for lysosomal and cytolytic granule exocytosis. Critical factor involved in NK cell-mediated cytotoxicity. Drives the polarization of cytolytic granules and microtubule-organizing centers (MTOCs) toward the immune synapse between effector NK lymphocytes and target cells. In neurons, mediates the anterograde axonal long-range transport of presynaptic lysosome-related vesicles required for presynaptic biogenesis and synaptic function. Also acts as a regulator of endosome to lysosome trafficking pathways of special significance for host defense. Recruits RUFY1 onto early endosomes regulating endosomes to trans-Golgi network proteins retrieval. Regulates cargo trafficking to lysosomes by binding to PLEKHM1 and recruiting the HOPS subunit VPS41, resulting in functional assembly of the HOPS complex on lysosomal membranes. Plays an important role in cargo delivery to lysosomes for antigen presentation and microbial killing. Directs the intersection of CD1d with lipid antigens in lysosomes, and plays a role in intersecting phagosomes with lysosomes to generate phagolysosomes that kill microbes. Involved in the process of MHC II presentation. Regulates the delivery of antigens to lysosomes and the formation of MHC II-peptide complexes through the recruitment of the HOPS complex to lysosomes allowing the fusion of late endosomes to lysosomes. May play a role in chromosome segregation. In terms of biological role, (Microbial infection) During Mycobacterium tuberculosis (Mtb) infection, is required for plasma membrane repair by controlling the exocytosis of lysosomes in macrophages. ARL8B secretion pathway is crucial to control the type of cell death of the M.tuberculosis-infected macrophages, distinguishing avirulent from virulent Mtb induced necrotic cell death. Its function is as follows. (Microbial infection) During infection, coronaviruses such as SARS-CoV-2 and the chaperone HSPA5/GRP78 are probably co-released through ARL8B-dependent lysosomal exocytic pathway for unconventional egress. This chain is ADP-ribosylation factor-like protein 8B, found in Homo sapiens (Human).